The chain runs to 781 residues: Protein argonaute (781 aa).

The PAZ domain occupies 110-194 (SMNELLTERR…RHNDYCNSVM (85 aa)). A Piwi domain is found at 436-760 (LVVIVIPGPK…LSKFCGEVLR (325 aa)).

Belongs to the argonaute family. Ago subfamily. Interacts with miR2. Highly specific binding to the mRNA m7G-cap. May be a component of the RNA-induced silencing complex (RISC), a sequence-specific, multicomponent nuclease that destroys or silences messenger RNAs homologous to the silencing trigger.

It localises to the cytoplasm. Its function is as follows. Plays an essential role in growth and, with Dicer, also involved in microRNA (miRNA)-mediated translational repression. The RNA interference pathway is implicated in antigenic variation having a role in regulation of variant-specific surface protein (VSP)-coding gene expression. Several VSP genes are transcribed but only transcripts encoding the VSP to be expressed accumulate. Antisense RNAs corresponding to the silenced VSP genes are detected. This Giardia intestinalis (Giardia lamblia) protein is Protein argonaute.